The chain runs to 485 residues: MTPNRRSTDSYNMLGASFDFDPDFSLLSNKTHKNKNPKPPVKLLPYRHGSNTTSSDSDSYIFNSGSGSSDAETPAPVAPIFISLEDVLLNGQLIDFAIDPSGVKFLEANYPLDSEDQIRKAVFEKFTESTTLFVGLCHSRNGNFIVQKLVELATPAEQRELLRQMIDGGLLAMCKDKFACRVVQLALQKFDHSNVFQLIQELSTFDLAAMCTDQISIHVIQRVVKQLPVDMWTFFVHFLSSGDSLMAVCQDKYGCRLVQQVIDRLAENPKLPCFKFRIQLLHSLMTCIVRNCYRLSSNEFANYVIQYVIKSSGIMEMYRDTIIDKCLLRNLLSMSQDKYASHVIEGAFLFAPPALLHEMMEEIFSGYVKDVESNRDALDILLFHQYGNYVVQQMISICTAALIGKEERELPPAILLLYSGWYEKMKQRVLQHASRLERFSSGKKIIDSVMRHGVPTAAAVNAQAAPSLMELTAQFDAMFPSFLAR.

The segment at 29 to 72 (NKTHKNKNPKPPVKLLPYRHGSNTTSSDSDSYIFNSGSGSSDAE) is disordered. The span at 49–71 (GSNTTSSDSDSYIFNSGSGSSDA) shows a compositional bias: polar residues. Pumilio repeat units lie at residues 86-124 (DVLLNGQLIDFAIDPSGVKFLEANYPLDSEDQIRKAVFE), 128-163 (ESTTLFVGLCHSRNGNFIVQKLVELATPAEQRELLR), 164-200 (QMIDGGLLAMCKDKFACRVVQLALQKFDHSNVFQLIQ), 201-236 (ELSTFDLAAMCTDQISIHVIQRVVKQLPVDMWTFFV), 237-279 (HFLS…FRIQ), 287-324 (CIVRNCYRLSSNEFANYVIQYVIKSSGIMEMYRDTIID), 326-361 (CLLRNLLSMSQDKYASHVIEGAFLFAPPALLHEMME), and 370-411 (DVES…RELP). Residues 439–454 (FSSGKKIIDSVMRHGV) are RNA-binding.

Its function is as follows. RNA-binding protein that binds to the consensus sequence 5'-CUCUGUAUCUUGU-3' in mRNA 3'-UTRs and modulates mRNA expression and stability. Functions redundantly with puf-5 and puf-6 in oocyte formation and organization, early embryonic cell divisions, and repression of expression of glp-1 and other maternal mRNAs in late oogenesis. The sequence is that of Pumilio domain-containing protein 7 from Caenorhabditis elegans.